The primary structure comprises 278 residues: Release factor glutamine methyltransferase (278 aa).

S-adenosyl-L-methionine contacts are provided by residues 117–121 (GTGSG), aspartate 140, and asparagine 184. Residue 184–187 (NPPY) coordinates substrate.

Belongs to the protein N5-glutamine methyltransferase family. PrmC subfamily.

It carries out the reaction L-glutaminyl-[peptide chain release factor] + S-adenosyl-L-methionine = N(5)-methyl-L-glutaminyl-[peptide chain release factor] + S-adenosyl-L-homocysteine + H(+). Its function is as follows. Methylates the class 1 translation termination release factors RF1/PrfA and RF2/PrfB on the glutamine residue of the universally conserved GGQ motif. The chain is Release factor glutamine methyltransferase from Bacteroides thetaiotaomicron (strain ATCC 29148 / DSM 2079 / JCM 5827 / CCUG 10774 / NCTC 10582 / VPI-5482 / E50).